The following is a 295-amino-acid chain: UDP-N-acetylenolpyruvoylglucosamine reductase (295 aa).

One can recognise an FAD-binding PCMH-type domain in the interval 25 to 189; the sequence is RVGGPADLFA…LEALFRLDQR (165 aa). The active site involves Arg-169. Catalysis depends on Ser-218, which acts as the Proton donor. Glu-288 is an active-site residue.

This sequence belongs to the MurB family. FAD is required as a cofactor.

It localises to the cytoplasm. The catalysed reaction is UDP-N-acetyl-alpha-D-muramate + NADP(+) = UDP-N-acetyl-3-O-(1-carboxyvinyl)-alpha-D-glucosamine + NADPH + H(+). Its pathway is cell wall biogenesis; peptidoglycan biosynthesis. Its function is as follows. Cell wall formation. The protein is UDP-N-acetylenolpyruvoylglucosamine reductase of Pelobacter propionicus (strain DSM 2379 / NBRC 103807 / OttBd1).